The primary structure comprises 403 residues: Chalcone synthase 3 (403 aa).

Residue C170 is part of the active site.

This sequence belongs to the thiolase-like superfamily. Chalcone/stilbene synthases family.

The catalysed reaction is (E)-4-coumaroyl-CoA + 3 malonyl-CoA + 3 H(+) = 2',4,4',6'-tetrahydroxychalcone + 3 CO2 + 4 CoA. The protein operates within secondary metabolite biosynthesis; flavonoid biosynthesis. The primary product of this enzyme is 4,2',4',6'-tetrahydroxychalcone (also termed naringenin-chalcone or chalcone) which can under specific conditions spontaneously isomerize into naringenin. The chain is Chalcone synthase 3 (CHS3) from Gerbera hybrida (Daisy).